The following is a 348-amino-acid chain: D-erythrose-4-phosphate dehydrogenase (348 aa).

NAD(+) is bound by residues 12–13 (RI) and Arg81. Substrate contacts are provided by residues 154–156 (SCT), Arg200, 213–214 (TK), and Arg236. The Nucleophile role is filled by Cys155. Asn318 is an NAD(+) binding site.

Belongs to the glyceraldehyde-3-phosphate dehydrogenase family. Epd subfamily. As to quaternary structure, homotetramer.

It localises to the cytoplasm. It carries out the reaction D-erythrose 4-phosphate + NAD(+) + H2O = 4-phospho-D-erythronate + NADH + 2 H(+). Its pathway is cofactor biosynthesis; pyridoxine 5'-phosphate biosynthesis; pyridoxine 5'-phosphate from D-erythrose 4-phosphate: step 1/5. Catalyzes the NAD-dependent conversion of D-erythrose 4-phosphate to 4-phosphoerythronate. This is D-erythrose-4-phosphate dehydrogenase from Salmonella schwarzengrund (strain CVM19633).